The primary structure comprises 439 residues: Homogentisate 1,2-dioxygenase (439 aa).

His-289 (proton acceptor) is an active-site residue. Positions 332 and 338 each coordinate Fe cation. Homogentisate-binding residues include Tyr-347 and His-368. His-368 is a Fe cation binding site.

Belongs to the homogentisate dioxygenase family. In terms of assembly, hexamer; dimer of trimers. The cofactor is Fe cation.

It catalyses the reaction homogentisate + O2 = 4-maleylacetoacetate + H(+). It functions in the pathway amino-acid degradation; L-phenylalanine degradation; acetoacetate and fumarate from L-phenylalanine: step 4/6. Involved in the catabolism of homogentisate (2,5-dihydroxyphenylacetate or 2,5-OH-PhAc), a central intermediate in the degradation of phenylalanine and tyrosine. Catalyzes the oxidative ring cleavage of the aromatic ring of homogentisate to yield maleylacetoacetate. This Xanthomonas euvesicatoria pv. vesicatoria (strain 85-10) (Xanthomonas campestris pv. vesicatoria) protein is Homogentisate 1,2-dioxygenase.